Consider the following 159-residue polypeptide: S-ribosylhomocysteine lyase (159 aa).

Residues His-53, His-57, and Cys-124 each coordinate Fe cation.

Belongs to the LuxS family. Homodimer. It depends on Fe cation as a cofactor.

The enzyme catalyses S-(5-deoxy-D-ribos-5-yl)-L-homocysteine = (S)-4,5-dihydroxypentane-2,3-dione + L-homocysteine. Its function is as follows. Involved in the synthesis of autoinducer 2 (AI-2) which is secreted by bacteria and is used to communicate both the cell density and the metabolic potential of the environment. The regulation of gene expression in response to changes in cell density is called quorum sensing. Catalyzes the transformation of S-ribosylhomocysteine (RHC) to homocysteine (HC) and 4,5-dihydroxy-2,3-pentadione (DPD). This Clostridium beijerinckii (strain ATCC 51743 / NCIMB 8052) (Clostridium acetobutylicum) protein is S-ribosylhomocysteine lyase.